Consider the following 295-residue polypeptide: RNA polymerase sigma-C factor (295 aa).

The short motif at 73-86 (DLIQEANIGLMKAV) is the Polymerase core binding element. Residues 250–269 (LSELGEHFGFSRERARQLEI) constitute a DNA-binding region (H-T-H motif).

This sequence belongs to the sigma-70 factor family.

Sigma factors are initiation factors that promote the attachment of RNA polymerase to specific initiation sites and are then released. This sigma factor is essential for normal fruiting body formation. This is RNA polymerase sigma-C factor (sigC) from Myxococcus xanthus.